The primary structure comprises 532 residues: Copalyl diphosphate synthase (532 aa).

The DXDDTA motif signature appears at 313–318; it reads DTDDTA. The short motif at 443–449 is the QXXDGSW motif element; sequence QSDDGSW.

This sequence belongs to the terpene synthase family. It depends on Mg(2+) as a cofactor.

The catalysed reaction is (2E,6E,10E)-geranylgeranyl diphosphate = (+)-copalyl diphosphate. Involved in the biosynthesis of the mercapturic acid derivative diterpene cyslabdan A, a potentiator of the beta-lactam antibiotic imipenem. Catalyzes the conversion of geranylgeranyl diphosphate (GGDP) into (+)-copalyl diphosphate. This is Copalyl diphosphate synthase from Streptomyces cyslabdanicus.